The following is a 312-amino-acid chain: DNA-directed RNA polymerase subunit alpha (312 aa).

Residues 1–226 are alpha N-terminal domain (alpha-NTD); it reads MIEFEKPNIT…EHFKVFESAD (226 aa). The alpha C-terminal domain (alpha-CTD) stretch occupies residues 243-312; sequence KEKKLEMTIE…DLGLSLRQED (70 aa).

It belongs to the RNA polymerase alpha chain family. In terms of assembly, homodimer. The RNAP catalytic core consists of 2 alpha, 1 beta, 1 beta' and 1 omega subunit. When a sigma factor is associated with the core the holoenzyme is formed, which can initiate transcription.

It catalyses the reaction RNA(n) + a ribonucleoside 5'-triphosphate = RNA(n+1) + diphosphate. DNA-dependent RNA polymerase catalyzes the transcription of DNA into RNA using the four ribonucleoside triphosphates as substrates. The sequence is that of DNA-directed RNA polymerase subunit alpha from Lactobacillus acidophilus (strain ATCC 700396 / NCK56 / N2 / NCFM).